Here is a 114-residue protein sequence, read N- to C-terminus: UPF0757 protein YmgG (114 aa).

The protein belongs to the UPF0757 family.

The protein is UPF0757 protein YmgG of Escherichia fergusonii (strain ATCC 35469 / DSM 13698 / CCUG 18766 / IAM 14443 / JCM 21226 / LMG 7866 / NBRC 102419 / NCTC 12128 / CDC 0568-73).